Reading from the N-terminus, the 66-residue chain is Alpha-conotoxin RegIIA (66 aa).

Positions 1–21 are cleaved as a signal peptide; the sequence is MGMRMMFTVFLLVVLTTTVVS. Residues 22 to 49 constitute a propeptide that is removed on maturation; sequence STSVRASDGRNAAADNRASDLIAQIVRR. Disulfide bonds link Cys51-Cys57 and Cys52-Cys65. Residues 53–55 form a ser-Xaa-Pro motif, crucial for potent interaction with nAChR region; it reads SHP. Cys65 carries the post-translational modification Cysteine amide.

It belongs to the conotoxin A superfamily. In terms of tissue distribution, expressed by the venom duct.

It localises to the secreted. Functionally, alpha-conotoxins act on postsynaptic membranes, they bind to the nicotinic acetylcholine receptors (nAChR) and thus inhibit them. This toxin potently inhibits alpha-3 containing subunit nAChR. It inhibits alpha-3-beta-2/CHRNA3-CHRNB2 (IC(50)=10.7-33 nM (rat)/132.4-704.1 nM (human)) and alpha-3-beta-4/CHRNA3-CHRNB4 (IC(50)=47.3-97 nM (rat)/52.1 nM (human)). It also inhibits alpha-7/CHRNA7 nAChR with IC(50)=103-210 nM (human)/41-61.2 nM (rat) nAChRs. It is more potent on alpha-3-beta-2 receptors in human than in rat, due to a variation (Pro vs Gln) in alpha-3 subunit in these orthologs. Conversely, does not show species-specific differences in sensitivity at the alpha-3-beta-4 receptor. The polypeptide is Alpha-conotoxin RegIIA (Conus regius (Crown cone)).